Consider the following 513-residue polypeptide: Sugar transport protein MST8 (513 aa).

Residues 1–17 (MAGGAMTDTDGAHKNYP) are Cytoplasmic-facing. The chain crosses the membrane as a helical span at residues 18 to 38 (GKMTIFVFLACLVASSGGLIF). Topologically, residues 39 to 81 (GYDIGISGGVTSMDSFLIKFFPSVYAKEKEMVETNQYCKFDSE) are extracellular. The helical transmembrane segment at 82-102 (LLTLFTSSLYLAALIASLFAS) threads the bilayer. At 103–116 (VITRKFGRRITMLG) the chain is on the cytoplasmic side. The helical transmembrane segment at 117-137 (GGVIFLVGAILNGAAADVAML) threads the bilayer. At 138 to 139 (II) the chain is on the extracellular side. A helical membrane pass occupies residues 140–160 (GRILLGIGVGFSNQAVPLYLS). The Cytoplasmic segment spans residues 161-166 (EMAPAR). A helical membrane pass occupies residues 167-187 (MRGMLNISFQLMITVGILAAN). The Extracellular portion of the chain corresponds to 188-201 (LINYFTDKIAGGWG). Residues 202-222 (WRVSLGLAAVPAVIMAGGSLF) form a helical membrane-spanning segment. Topologically, residues 223–294 (LPDTPNSLLS…LVMSVLIPTL (72 aa)) are cytoplasmic. A helical transmembrane segment spans residues 295 to 315 (QQLTGINVVMFYAPVLFKTIG). At 316–320 (FGGTA) the chain is on the extracellular side. Residues 321-341 (SLMSAVITGLVNMFATFVSIA) traverse the membrane as a helical segment. The Cytoplasmic segment spans residues 342–347 (TVDRLG). The helical transmembrane segment at 348–368 (RRKLLLQGGVQMIFAQFILGT) threads the bilayer. Over 369–385 (LIAVKFGTAGVANISRG) the chain is Extracellular. A helical membrane pass occupies residues 386–406 (YAIVVVLCICVFVSAFAWSWG). The Cytoplasmic portion of the chain corresponds to 407-425 (PLGWLVPSEIFPLEIRSAA). A helical membrane pass occupies residues 426–446 (QSVVVVFNMAFTFIIAQIFLM). Topologically, residues 447–450 (MLCH) are extracellular. Residues 451 to 471 (LKFGLFYFFGAMELIMTGFVF) form a helical membrane-spanning segment. The Cytoplasmic portion of the chain corresponds to 472–512 (FFLPETKGIPIEEMDRIWGKHWYWRRFVGAGAGGKVEITST).

It belongs to the major facilitator superfamily. Sugar transporter (TC 2.A.1.1) family. Expressed specifically in anthers.

It localises to the membrane. Its function is as follows. Mediates active uptake of hexoses by sugar:proton symport. May play an important role in transporting monosaccharides during anther development. The protein is Sugar transport protein MST8 of Oryza sativa subsp. japonica (Rice).